The primary structure comprises 434 residues: tRNA modification GTPase MnmE (434 aa).

3 residues coordinate (6S)-5-formyl-5,6,7,8-tetrahydrofolate: Arg-20, Glu-79, and Val-119. A TrmE-type G domain is found at 219–361 (GLRVVLAGRP…LQEKLVEIGK (143 aa)). GTP-binding positions include 229 to 234 (NAGKST), 248 to 254 (APIAGTT), and 273 to 276 (DTAG). Mg(2+)-binding residues include Ser-233 and Thr-254. Residue Lys-434 participates in (6S)-5-formyl-5,6,7,8-tetrahydrofolate binding.

This sequence belongs to the TRAFAC class TrmE-Era-EngA-EngB-Septin-like GTPase superfamily. TrmE GTPase family. As to quaternary structure, homodimer. Heterotetramer of two MnmE and two MnmG subunits. K(+) serves as cofactor.

The protein resides in the cytoplasm. Exhibits a very high intrinsic GTPase hydrolysis rate. Involved in the addition of a carboxymethylaminomethyl (cmnm) group at the wobble position (U34) of certain tRNAs, forming tRNA-cmnm(5)s(2)U34. In Zymomonas mobilis subsp. mobilis (strain ATCC 31821 / ZM4 / CP4), this protein is tRNA modification GTPase MnmE.